A 109-amino-acid polypeptide reads, in one-letter code: Sperm-specific class P protein 16 (109 aa).

In terms of domain architecture, MSP spans 2–109 (SLTADPPACT…TVTIPMSATA (108 aa)).

In terms of tissue distribution, expressed at higher level in testis.

This chain is Sperm-specific class P protein 16 (ssp-16), found in Caenorhabditis elegans.